The primary structure comprises 166 residues: Large ribosomal subunit protein bL9 (166 aa).

Belongs to the bacterial ribosomal protein bL9 family.

Its function is as follows. Binds to the 23S rRNA. In Borrelia garinii subsp. bavariensis (strain ATCC BAA-2496 / DSM 23469 / PBi) (Borreliella bavariensis), this protein is Large ribosomal subunit protein bL9.